The primary structure comprises 85 residues: Large ribosomal subunit protein uL23 (85 aa).

The protein belongs to the universal ribosomal protein uL23 family. In terms of assembly, part of the 50S ribosomal subunit. Interacts with protein L29 and weakly with protein L39e.

Functionally, binds to a specific region on the 23S rRNA. Located at the polypeptide exit tunnel on the outside of the subunit. The sequence is that of Large ribosomal subunit protein uL23 from Haloarcula marismortui (strain ATCC 43049 / DSM 3752 / JCM 8966 / VKM B-1809) (Halobacterium marismortui).